The primary structure comprises 26 residues: Photosystem II stability/assembly factor HCF136, chloroplastic (26 aa).

This sequence belongs to the Ycf48 family.

It is found in the plastid. It localises to the chloroplast thylakoid lumen. Functionally, essential for photosystem II (PSII) biogenesis; required for assembly of an early intermediate in PSII assembly that includes D2 (psbD) and cytochrome b559. The protein is Photosystem II stability/assembly factor HCF136, chloroplastic of Populus euphratica (Euphrates poplar).